Reading from the N-terminus, the 194-residue chain is MSAITITEAAQAYLAELLEKQSTPGIGIRIFITQPGTQYAETCIAYCKPGEEKVEDTAIALKDFTAWIDAVSEPFLEDAVVDYATDRMGGQLTIKAPNAKVPMVNEDSPITERINYYLQTEINPGLASHGGQVSLVDVVEDNIAVLRFGGGCQGCGMVDMTLKDGVEKTLIERIPELKGVRDVTDHSNKENAYY.

[4Fe-4S] cluster is bound by residues cysteine 152 and cysteine 155.

This sequence belongs to the NfuA family. Homodimer. [4Fe-4S] cluster is required as a cofactor.

Its function is as follows. Involved in iron-sulfur cluster biogenesis. Binds a 4Fe-4S cluster, can transfer this cluster to apoproteins, and thereby intervenes in the maturation of Fe/S proteins. Could also act as a scaffold/chaperone for damaged Fe/S proteins. This Pseudomonas aeruginosa (strain LESB58) protein is Fe/S biogenesis protein NfuA.